Consider the following 209-residue polypeptide: Thymidylate kinase (209 aa).

10–17 lines the ATP pocket; that stretch reads GLDGAGKS.

It belongs to the thymidylate kinase family.

The enzyme catalyses dTMP + ATP = dTDP + ADP. Phosphorylation of dTMP to form dTDP in both de novo and salvage pathways of dTTP synthesis. The chain is Thymidylate kinase from Francisella tularensis subsp. tularensis (strain FSC 198).